Consider the following 178-residue polypeptide: Inorganic pyrophosphatase (178 aa).

Substrate contacts are provided by lysine 30, arginine 44, and tyrosine 56. Mg(2+) is bound by residues aspartate 66, aspartate 71, and aspartate 103. Tyrosine 142 lines the substrate pocket.

The protein belongs to the PPase family. Homohexamer. It depends on Mg(2+) as a cofactor.

The protein localises to the cytoplasm. The catalysed reaction is diphosphate + H2O = 2 phosphate + H(+). In terms of biological role, catalyzes the hydrolysis of inorganic pyrophosphate (PPi) forming two phosphate ions. The sequence is that of Inorganic pyrophosphatase from Xanthomonas campestris pv. campestris (strain ATCC 33913 / DSM 3586 / NCPPB 528 / LMG 568 / P 25).